The following is a 200-amino-acid chain: Recombination protein RecR (200 aa).

The C4-type zinc-finger motif lies at 58 to 75; it reads CPDCFCLKTSKTSSCDFC. The 96-residue stretch at 82–177 folds into the Toprim domain; it reads SFLCIVATPK…KISRLALGMP (96 aa).

This sequence belongs to the RecR family.

May play a role in DNA repair. It seems to be involved in an RecBC-independent recombinational process of DNA repair. It may act with RecF and RecO. The sequence is that of Recombination protein RecR from Chlamydia muridarum (strain MoPn / Nigg).